The sequence spans 154 residues: Ribosome maturation factor RimP (154 aa).

This sequence belongs to the RimP family.

The protein localises to the cytoplasm. In terms of biological role, required for maturation of 30S ribosomal subunits. The protein is Ribosome maturation factor RimP of Salmonella gallinarum (strain 287/91 / NCTC 13346).